The following is a 241-amino-acid chain: NH(3)-dependent NAD(+) synthetase (241 aa).

29-36 (GISGGIDS) lines the ATP pocket. Residue D35 participates in Mg(2+) binding. R110 serves as a coordination point for deamido-NAD(+). Residue E135 participates in Mg(2+) binding. Residues K143 and D150 each coordinate deamido-NAD(+). Residues K159 and S181 each coordinate ATP. Position 226–227 (226–227 (HK)) interacts with deamido-NAD(+).

This sequence belongs to the NAD synthetase family. Homodimer.

The catalysed reaction is deamido-NAD(+) + NH4(+) + ATP = AMP + diphosphate + NAD(+) + H(+). It participates in cofactor biosynthesis; NAD(+) biosynthesis; NAD(+) from deamido-NAD(+) (ammonia route): step 1/1. Its function is as follows. Catalyzes the ATP-dependent amidation of deamido-NAD to form NAD. Uses ammonia as a nitrogen source. This chain is NH(3)-dependent NAD(+) synthetase, found in Finegoldia magna (strain ATCC 29328 / DSM 20472 / WAL 2508) (Peptostreptococcus magnus).